We begin with the raw amino-acid sequence, 303 residues long: Probable cell division protein WhiA (303 aa).

The segment at residues 272 to 303 is a DNA-binding region (H-T-H motif); it reads SIQQIADSLAVPLTKSGVNHRLRKINKIAEDL.

It belongs to the WhiA family.

Its function is as follows. Involved in cell division and chromosome segregation. This Streptococcus mutans serotype c (strain ATCC 700610 / UA159) protein is Probable cell division protein WhiA.